The chain runs to 66 residues: Venom peptide CtAPI (66 aa).

5 cysteine pairs are disulfide-bonded: C7/C44, C16/C40, C20/C33, C24/C64, and C46/C58. The TIL domain occupies 7-64; sequence CEKDEEFVNCAPRCPQNCRNIRSYQPCLVLTPVCAPGCVCRSGKVKNDRGDCVSITDC.

The protein belongs to the serine protease inhibitor-like (TIL domain-containing) family. As to expression, expressed by the venom gland.

It localises to the secreted. In terms of biological role, serine protease inhibitor. In Chaerilus tricostatus (Scorpion), this protein is Venom peptide CtAPI.